We begin with the raw amino-acid sequence, 608 residues long: Serine/threonine-protein kinase SSN3 (608 aa).

A disordered region spans residues 1 to 72 (MSYSSASFRK…PGTVGTRTSI (72 aa)). Residues 17-47 (SQPSQTTTTTTSANQPQSQSQQQPLQQSQQQ) are compositionally biased toward low complexity. Over residues 49-59 (LHMKPNPHIPH) the composition is skewed to basic residues. A Protein kinase domain is found at 104 to 492 (YQIMGYIAAG…ADQALLHPYF (389 aa)). Residues 110–118 (IAAGTYGKV) and Lys-182 each bind ATP. Asp-307 (proton acceptor) is an active-site residue. Residues 523–608 (MTTAANNNNN…LPGGIRKKRG (86 aa)) form a disordered region. The segment covering 528 to 583 (NNNNNNNNNNNNNNNNNNNNNNNNNNNSGHQLSQQQNVQIQQVHQMQQQIHSQQLQ) has biased composition (low complexity).

The protein belongs to the protein kinase superfamily. CMGC Ser/Thr protein kinase family. CDC2/CDKX subfamily. As to quaternary structure, component of the SRB8-11 complex, a regulatory module of the Mediator complex. Mg(2+) is required as a cofactor.

It localises to the nucleus. The enzyme catalyses L-seryl-[protein] + ATP = O-phospho-L-seryl-[protein] + ADP + H(+). The catalysed reaction is L-threonyl-[protein] + ATP = O-phospho-L-threonyl-[protein] + ADP + H(+). It catalyses the reaction [DNA-directed RNA polymerase] + ATP = phospho-[DNA-directed RNA polymerase] + ADP + H(+). Functionally, component of the SRB8-11 complex. The SRB8-11 complex is a regulatory module of the Mediator complex which is itself involved in regulation of basal and activated RNA polymerase II-dependent transcription. The SRB8-11 complex may be involved in the transcriptional repression of a subset of genes regulated by Mediator. It may inhibit the association of the Mediator complex with RNA polymerase II to form the holoenzyme complex. The SRB8-11 complex phosphorylates the C-terminal domain (CTD) of the largest subunit of RNA polymerase II. This Candida albicans (strain SC5314 / ATCC MYA-2876) (Yeast) protein is Serine/threonine-protein kinase SSN3 (SSN3).